The primary structure comprises 359 residues: Dual-specificity RNA methyltransferase RlmN (359 aa).

Glu90 functions as the Proton acceptor in the catalytic mechanism. Residues 109–342 form the Radical SAM core domain; that stretch reads HQERYTVCIS…CTIRESKGLD (234 aa). Cys116 and Cys347 are disulfide-bonded. The [4Fe-4S] cluster site is built by Cys123, Cys127, and Cys130. Residues 173-174, Ser205, 228-230, and Asn304 each bind S-adenosyl-L-methionine; these read GE and SLH. Cys347 acts as the S-methylcysteine intermediate in catalysis.

Belongs to the radical SAM superfamily. RlmN family. The cofactor is [4Fe-4S] cluster.

It localises to the cytoplasm. The enzyme catalyses adenosine(2503) in 23S rRNA + 2 reduced [2Fe-2S]-[ferredoxin] + 2 S-adenosyl-L-methionine = 2-methyladenosine(2503) in 23S rRNA + 5'-deoxyadenosine + L-methionine + 2 oxidized [2Fe-2S]-[ferredoxin] + S-adenosyl-L-homocysteine. The catalysed reaction is adenosine(37) in tRNA + 2 reduced [2Fe-2S]-[ferredoxin] + 2 S-adenosyl-L-methionine = 2-methyladenosine(37) in tRNA + 5'-deoxyadenosine + L-methionine + 2 oxidized [2Fe-2S]-[ferredoxin] + S-adenosyl-L-homocysteine. Functionally, specifically methylates position 2 of adenine 2503 in 23S rRNA and position 2 of adenine 37 in tRNAs. m2A2503 modification seems to play a crucial role in the proofreading step occurring at the peptidyl transferase center and thus would serve to optimize ribosomal fidelity. The sequence is that of Dual-specificity RNA methyltransferase RlmN from Sulfurovum sp. (strain NBC37-1).